The primary structure comprises 146 residues: Transcription antitermination protein NusB (146 aa).

Belongs to the NusB family.

Involved in transcription antitermination. Required for transcription of ribosomal RNA (rRNA) genes. Binds specifically to the boxA antiterminator sequence of the ribosomal RNA (rrn) operons. This is Transcription antitermination protein NusB from Koribacter versatilis (strain Ellin345).